The chain runs to 542 residues: Protein phosphatase 1G (542 aa).

The N-myristoyl glycine moiety is linked to residue glycine 2. At arginine 22 the chain carries Omega-N-methylarginine. Residues 26–502 (PYGFSAMQGW…DNMTCIIICF (477 aa)) form the PPM-type phosphatase domain. Aspartate 60 and glycine 61 together coordinate Mn(2+). 2 disordered regions span residues 118 to 139 (AGRP…DVDN) and 162 to 325 (QNCQ…SDSG). Phosphothreonine is present on threonine 122. Composition is skewed to acidic residues over residues 123–139 (EDED…DVDN) and 259–309 (DSED…DEEM). Lysine 380 is modified (N6-acetyllysine). 2 residues coordinate Mn(2+): aspartate 438 and aspartate 493. The interval 510 to 542 (LQPESGKRKLEEALSTEGAEENGNSDKKKAKRD) is disordered. The residue at position 524 (serine 524) is a Phosphoserine.

It belongs to the PP2C family. As to quaternary structure, interacts with NOL3; may dephosphorylate NOL3. Requires Mg(2+) as cofactor. Mn(2+) serves as cofactor.

Its subcellular location is the cytoplasm. It localises to the membrane. The catalysed reaction is O-phospho-L-seryl-[protein] + H2O = L-seryl-[protein] + phosphate. It carries out the reaction O-phospho-L-threonyl-[protein] + H2O = L-threonyl-[protein] + phosphate. The chain is Protein phosphatase 1G from Rattus norvegicus (Rat).